The chain runs to 423 residues: Phosphoribosylamine--glycine ligase (423 aa).

The ATP-grasp domain occupies 107-312; it reads KDLCARYGIP…LLPLLYAAAT (206 aa). Residue 133–193 coordinates ATP; that stretch reads IREEGAPIVI…EAYLDGEEAS (61 aa). Mg(2+)-binding residues include glutamate 282 and asparagine 284.

It belongs to the GARS family. Mg(2+) is required as a cofactor. Mn(2+) serves as cofactor.

The enzyme catalyses 5-phospho-beta-D-ribosylamine + glycine + ATP = N(1)-(5-phospho-beta-D-ribosyl)glycinamide + ADP + phosphate + H(+). It functions in the pathway purine metabolism; IMP biosynthesis via de novo pathway; N(1)-(5-phospho-D-ribosyl)glycinamide from 5-phospho-alpha-D-ribose 1-diphosphate: step 2/2. This chain is Phosphoribosylamine--glycine ligase, found in Rhizobium meliloti (strain 1021) (Ensifer meliloti).